Here is a 215-residue protein sequence, read N- to C-terminus: Thiamine-phosphate synthase (215 aa).

Residues 37 to 41 (QLRIK) and Asn-69 contribute to the 4-amino-2-methyl-5-(diphosphooxymethyl)pyrimidine site. Asp-70 and Asp-89 together coordinate Mg(2+). Ser-108 provides a ligand contact to 4-amino-2-methyl-5-(diphosphooxymethyl)pyrimidine. Residue 134–136 (TQT) participates in 2-[(2R,5Z)-2-carboxy-4-methylthiazol-5(2H)-ylidene]ethyl phosphate binding. Lys-137 serves as a coordination point for 4-amino-2-methyl-5-(diphosphooxymethyl)pyrimidine. Residues Gly-166 and 186–187 (VS) contribute to the 2-[(2R,5Z)-2-carboxy-4-methylthiazol-5(2H)-ylidene]ethyl phosphate site.

Belongs to the thiamine-phosphate synthase family. It depends on Mg(2+) as a cofactor.

It carries out the reaction 2-[(2R,5Z)-2-carboxy-4-methylthiazol-5(2H)-ylidene]ethyl phosphate + 4-amino-2-methyl-5-(diphosphooxymethyl)pyrimidine + 2 H(+) = thiamine phosphate + CO2 + diphosphate. The catalysed reaction is 2-(2-carboxy-4-methylthiazol-5-yl)ethyl phosphate + 4-amino-2-methyl-5-(diphosphooxymethyl)pyrimidine + 2 H(+) = thiamine phosphate + CO2 + diphosphate. It catalyses the reaction 4-methyl-5-(2-phosphooxyethyl)-thiazole + 4-amino-2-methyl-5-(diphosphooxymethyl)pyrimidine + H(+) = thiamine phosphate + diphosphate. Its pathway is cofactor biosynthesis; thiamine diphosphate biosynthesis; thiamine phosphate from 4-amino-2-methyl-5-diphosphomethylpyrimidine and 4-methyl-5-(2-phosphoethyl)-thiazole: step 1/1. Condenses 4-methyl-5-(beta-hydroxyethyl)thiazole monophosphate (THZ-P) and 2-methyl-4-amino-5-hydroxymethyl pyrimidine pyrophosphate (HMP-PP) to form thiamine monophosphate (TMP). This Yersinia pestis (strain Pestoides F) protein is Thiamine-phosphate synthase.